A 224-amino-acid chain; its full sequence is uncharacterized protein (224 aa).

Functionally, the presence of the two linear plasmids, termed pGKL1 and pGKL2, in strains of Kluyveromyces lactis confers the killer phenotype to the host cell, by promoting the secretion of a toxin able to inhibit the growth of sensitive strains. This is an uncharacterized protein from Kluyveromyces lactis (strain ATCC 8585 / CBS 2359 / DSM 70799 / NBRC 1267 / NRRL Y-1140 / WM37) (Yeast).